Here is a 501-residue protein sequence, read N- to C-terminus: Aldehyde dehydrogenase, cytosolic 1 (501 aa).

Position 2 is an N-acetylserine (Ser2). Lys91 and Lys128 each carry N6-acetyllysine. 246–251 is an NAD(+) binding site; the sequence is GSTEVG. The residue at position 252 (Lys252) is an N6-acetyllysine. Residue Glu269 is the Proton acceptor of the active site. Residue Cys303 is the Nucleophile of the active site. 3 positions are modified to N6-acetyllysine: Lys353, Lys367, and Lys410. Phosphoserine is present on Ser413. N6-acetyllysine occurs at positions 419, 435, and 495.

Belongs to the aldehyde dehydrogenase family. Homotetramer. Very low levels in lung and liver.

The protein resides in the cytoplasm. The enzyme catalyses an aldehyde + NAD(+) + H2O = a carboxylate + NADH + 2 H(+). The protein operates within alcohol metabolism; ethanol degradation; acetate from ethanol: step 2/2. In terms of biological role, can oxidize benzaldehyde, propionaldehyde and acetaldehyde. No detectable activity with retinal. The chain is Aldehyde dehydrogenase, cytosolic 1 (Aldh1a7) from Rattus norvegicus (Rat).